Here is a 2014-residue protein sequence, read N- to C-terminus: AP-1 accessory protein LAA1 (2014 aa).

Interacts with the clathrin-associated adapter complex AP-1. Interacts directly with LAA2.

It is found in the golgi apparatus. The protein resides in the cytoplasmic vesicle. Its subcellular location is the clathrin-coated vesicle. In terms of biological role, involved in localization of clathrin adapter protein complex-1 (AP-1) and subsequent AP-1-mediated clathrin-coated vesicle cargo loading. In complex with LAA2, cooperates with the small GTPase ARF1 and the phosphatidyl-inositol-4-phosphate (PI4P) synthesis to confer temporal specificity to AP-1 recruitment. The chain is AP-1 accessory protein LAA1 from Saccharomyces cerevisiae (strain ATCC 204508 / S288c) (Baker's yeast).